The chain runs to 1156 residues: Chromosome partition protein Smc (1156 aa).

37–44 contributes to the ATP binding site; that stretch reads PNGAGKSN. Positions 167–499 form a coiled coil; it reads SGIGEYERKK…AIEREVRSFS (333 aa). Residues 509–624 form the SMC hinge domain; that stretch reads KGVYGSVSEL…VENFESAKAI (116 aa). A coiled-coil region spans residues 654–1001; the sequence is GELNKRYYEE…EETENKKRKV (348 aa).

Belongs to the SMC family. As to quaternary structure, homodimer.

The protein localises to the cytoplasm. Its function is as follows. Required for chromosome condensation and partitioning. This chain is Chromosome partition protein Smc, found in Aquifex aeolicus (strain VF5).